Here is a 262-residue protein sequence, read N- to C-terminus: Small ribosomal subunit protein uS2 (262 aa).

A disordered region spans residues 224–262 (GKQGQDDAQQETADDNAANETVSEDSLKNLKNSVEGKED).

It belongs to the universal ribosomal protein uS2 family.

The sequence is that of Small ribosomal subunit protein uS2 from Limosilactobacillus reuteri (strain DSM 20016) (Lactobacillus reuteri).